A 642-amino-acid polypeptide reads, in one-letter code: Zinc finger protein 14 (642 aa).

The 73-residue stretch at 4–76 folds into the KRAB domain; sequence VSFEDVAVNF…MVERLCESRK (73 aa). A disordered region spans residues 77 to 99; that stretch reads GSKCGETTSQMPNVNINKETSTG. Residues 81–99 show a composition bias toward polar residues; that stretch reads GETTSQMPNVNINKETSTG. The C2H2-type 1 zinc-finger motif lies at 103-125; the sequence is HECSFCGKDFMHHSSLNRHMRSH. The C2H2-type 2; degenerate zinc-finger motif lies at 141 to 163; it reads CKRKAVGKTFSYRHCVRKHERTH. The C2H2-type 3 zinc-finger motif lies at 169–191; the sequence is YECKQCGKAFIYYQPFQRHERIH. The C2H2-type 4; atypical zinc finger occupies 197 to 217; the sequence is YECKQCGKTFIYYQSFQKHAH. C2H2-type zinc fingers lie at residues 223-245, 251-273, 279-301, 307-329, 335-357, 363-385, 391-413, 419-441, 447-469, 475-497, 503-525, 531-553, 559-581, 587-609, and 615-637; these read YECKQCGKTFICYQSFQRHERTH, YECKQCGKAFSCPTYFRTHERTH, YKCKECGKAFSFLSSFRRHKRTH, YECKECGKAFFYSASFQAHVITH, YKCKECGKAFNSSNSCRVHERTH, YECKRCGKSFSWSISLRMHERTH, YECKQCHKTFSFSSSLREHETTH, YECKQCGKAFRFSSSLQRHERTH, YECKQCGKAFRCSSYFRIHERSH, YECKQCGKVFIRSSSFRLHERTH, YECKLCGKAFSFSSSLREHEKIH, FECKRCGKAFLRSSQIRLHERTH, YQCKQCGKAFISSSKFRMHERTH, YRCKQCGKAFRFSSSVRIHERSH, and YECKQCGKAFISSSHFRLHERTH.

The protein belongs to the krueppel C2H2-type zinc-finger protein family.

It localises to the nucleus. Functionally, may be involved in transcriptional regulation. The sequence is that of Zinc finger protein 14 (ZNF14) from Macaca fascicularis (Crab-eating macaque).